A 114-amino-acid polypeptide reads, in one-letter code: Hydrogenase maturation factor HypA (114 aa).

Position 2 (His2) interacts with Ni(2+). Zn(2+)-binding residues include Cys73, Cys76, Cys90, and Cys93.

It belongs to the HypA/HybF family.

Functionally, involved in the maturation of [NiFe] hydrogenases. Required for nickel insertion into the metal center of the hydrogenase. In Klebsiella pneumoniae (strain 342), this protein is Hydrogenase maturation factor HypA.